Consider the following 354-residue polypeptide: Histidinol-phosphate aminotransferase (354 aa).

Lys210 is modified (N6-(pyridoxal phosphate)lysine).

The protein belongs to the class-II pyridoxal-phosphate-dependent aminotransferase family. Histidinol-phosphate aminotransferase subfamily. As to quaternary structure, homodimer. The cofactor is pyridoxal 5'-phosphate.

It carries out the reaction L-histidinol phosphate + 2-oxoglutarate = 3-(imidazol-4-yl)-2-oxopropyl phosphate + L-glutamate. It functions in the pathway amino-acid biosynthesis; L-histidine biosynthesis; L-histidine from 5-phospho-alpha-D-ribose 1-diphosphate: step 7/9. This chain is Histidinol-phosphate aminotransferase, found in Clostridium botulinum (strain Langeland / NCTC 10281 / Type F).